Reading from the N-terminus, the 87-residue chain is Large ribosomal subunit protein bL31B (87 aa).

This sequence belongs to the bacterial ribosomal protein bL31 family. Type B subfamily. As to quaternary structure, part of the 50S ribosomal subunit.

The chain is Large ribosomal subunit protein bL31B from Halorhodospira halophila (strain DSM 244 / SL1) (Ectothiorhodospira halophila (strain DSM 244 / SL1)).